A 380-amino-acid polypeptide reads, in one-letter code: MLIVADENIPLLDAFFQGFGEIRRYPGRSLDAASVKDADILLVRSVTKVDRQLLEGSRVRFVGTCTIGTDHLDLDYFAEAGIRWSSAPGCNARGVVDYVLGSLLTLAELDGVALPERVYGVVGAGEVGGRLVRVLHGLGWKVLVCDPLRQAAEGGDYVSLETILQQCDVISLHTPLQRGGQHPTWHLLGQAQLAQLRPGAWLVNASRGPVVDNVALRELLLDREDVHAVLDVWEGEPQVDLTLADLCTLATPHIAGYSLDGRQRGTAQIYQALCRFLGVNEQVRLAELLPKPPLAQIELDASTDLSWALATLCRAVYDPRRDDADFRRSLSDDPQQQRAAFDQLRKQYPQRREIEGLAVRLHGEAPQLAQLVSALGGVLV.

Substrate contacts are provided by Ser-45 and Thr-66. Residues Asp-146, Thr-174, 205–207 (ASR), and Asp-231 contribute to the NAD(+) site. Arg-207 is a catalytic residue. Glu-236 is an active-site residue. The active-site Proton donor is the His-253. An NAD(+)-binding site is contributed by Gly-256. A substrate-binding site is contributed by Tyr-257.

This sequence belongs to the D-isomer specific 2-hydroxyacid dehydrogenase family. PdxB subfamily. Homodimer.

The protein localises to the cytoplasm. The enzyme catalyses 4-phospho-D-erythronate + NAD(+) = (R)-3-hydroxy-2-oxo-4-phosphooxybutanoate + NADH + H(+). The protein operates within cofactor biosynthesis; pyridoxine 5'-phosphate biosynthesis; pyridoxine 5'-phosphate from D-erythrose 4-phosphate: step 2/5. Catalyzes the oxidation of erythronate-4-phosphate to 3-hydroxy-2-oxo-4-phosphonooxybutanoate. This is Erythronate-4-phosphate dehydrogenase from Pseudomonas putida (strain ATCC 700007 / DSM 6899 / JCM 31910 / BCRC 17059 / LMG 24140 / F1).